A 449-amino-acid polypeptide reads, in one-letter code: Glucose-6-phosphate isomerase 1 (449 aa).

Threonine 38 carries the phosphothreonine modification. Glutamate 290 (proton donor) is an active-site residue. Catalysis depends on residues histidine 311 and lysine 425.

It belongs to the GPI family. Homodimer.

Its subcellular location is the cytoplasm. The enzyme catalyses alpha-D-glucose 6-phosphate = beta-D-fructose 6-phosphate. It participates in carbohydrate biosynthesis; gluconeogenesis. The protein operates within carbohydrate degradation; glycolysis; D-glyceraldehyde 3-phosphate and glycerone phosphate from D-glucose: step 2/4. Catalyzes the reversible isomerization of glucose-6-phosphate to fructose-6-phosphate. The chain is Glucose-6-phosphate isomerase 1 from Geobacillus stearothermophilus (Bacillus stearothermophilus).